Consider the following 272-residue polypeptide: Acetyl-coenzyme A carboxylase carboxyl transferase subunit alpha (272 aa).

Residues 1–248 (MDKDFMKINV…KKTIVDSLLE (248 aa)) form the CoA carboxyltransferase C-terminal domain.

It belongs to the AccA family. Acetyl-CoA carboxylase is a heterohexamer composed of biotin carboxyl carrier protein (AccB), biotin carboxylase (AccC) and two subunits each of ACCase subunit alpha (AccA) and ACCase subunit beta (AccD).

The protein resides in the cytoplasm. The catalysed reaction is N(6)-carboxybiotinyl-L-lysyl-[protein] + acetyl-CoA = N(6)-biotinyl-L-lysyl-[protein] + malonyl-CoA. It participates in lipid metabolism; malonyl-CoA biosynthesis; malonyl-CoA from acetyl-CoA: step 1/1. Its function is as follows. Component of the acetyl coenzyme A carboxylase (ACC) complex. First, biotin carboxylase catalyzes the carboxylation of biotin on its carrier protein (BCCP) and then the CO(2) group is transferred by the carboxyltransferase to acetyl-CoA to form malonyl-CoA. In Clostridium beijerinckii (strain ATCC 51743 / NCIMB 8052) (Clostridium acetobutylicum), this protein is Acetyl-coenzyme A carboxylase carboxyl transferase subunit alpha.